A 128-amino-acid polypeptide reads, in one-letter code: Protein FAM229A (128 aa).

Residues 1–96 are disordered; it reads MQSSPSTLGP…VATDQNPVRP (96 aa).

This sequence belongs to the FAM229 family.

In Mus musculus (Mouse), this protein is Protein FAM229A (Fam229a).